The chain runs to 256 residues: Thiazole synthase (256 aa).

Lys-95 serves as the catalytic Schiff-base intermediate with DXP. Residues Gly-156, 182–183 (AG), and 204–205 (NT) contribute to the 1-deoxy-D-xylulose 5-phosphate site.

Belongs to the ThiG family. Homotetramer. Forms heterodimers with either ThiH or ThiS.

It is found in the cytoplasm. The catalysed reaction is [ThiS sulfur-carrier protein]-C-terminal-Gly-aminoethanethioate + 2-iminoacetate + 1-deoxy-D-xylulose 5-phosphate = [ThiS sulfur-carrier protein]-C-terminal Gly-Gly + 2-[(2R,5Z)-2-carboxy-4-methylthiazol-5(2H)-ylidene]ethyl phosphate + 2 H2O + H(+). It participates in cofactor biosynthesis; thiamine diphosphate biosynthesis. Its function is as follows. Catalyzes the rearrangement of 1-deoxy-D-xylulose 5-phosphate (DXP) to produce the thiazole phosphate moiety of thiamine. Sulfur is provided by the thiocarboxylate moiety of the carrier protein ThiS. In vitro, sulfur can be provided by H(2)S. This chain is Thiazole synthase, found in Escherichia coli O6:H1 (strain CFT073 / ATCC 700928 / UPEC).